We begin with the raw amino-acid sequence, 285 residues long: Enterobactin synthase component B (285 aa).

Positions 2–213 are isochorismatase; the sequence is AIPKLQAYAL…EELLPAPIPA (212 aa). A Carrier domain is found at 209-284; the sequence is APIPASKAAL…AWWKLLSREV (76 aa). 3 residues coordinate Mg(2+): Asp227, Gly242, and Asp244. Ser245 carries the O-(pantetheine 4'-phosphoryl)serine modification.

It in the N-terminal section; belongs to the isochorismatase family. In terms of assembly, proteins EntB, EntD, EntE, and EntF form a multienzyme complex called enterobactin synthase. Homodimer. Also forms a specific pairwise interaction with EntC; this interaction likely facilitates substrate channeling to connect the EntB and EntC active sites. The cofactor is Mg(2+). 4'-phosphopantetheine is transferred from CoA to a specific serine of apo-EntB by EntD. Holo-EntB so formed is then acylated with 2,3-dihydroxybenzoate in a reaction catalyzed by EntE.

Its subcellular location is the cytoplasm. The catalysed reaction is 3 2,3-dihydroxybenzoate + 3 L-serine + 6 ATP = enterobactin + 6 AMP + 6 diphosphate + 4 H(+). The enzyme catalyses isochorismate + H2O = (2S,3S)-2,3-dihydroxy-2,3-dihydrobenzoate + pyruvate. Its pathway is siderophore biosynthesis; enterobactin biosynthesis. Its function is as follows. Involved in the biosynthesis of the siderophore enterobactin (enterochelin), which is a macrocyclic trimeric lactone of N-(2,3-dihydroxybenzoyl)-serine. The serine trilactone serves as a scaffolding for the three catechol functionalities that provide hexadentate coordination for the tightly ligated iron(3+) atoms. EntB is a bifunctional protein that serves as an isochorismate lyase and an aryl carrier protein (ArCP). Catalyzes the conversion of isochorismate to 2,3-dihydro-2,3-dihydroxybenzoate (2,3-diDHB), the precursor of 2,3-dihydroxybenzoate (DHB). In the enterobactin assembly, EntB functions as an aryl carrier protein phosphopantetheinylated near the C terminus by EntD to yield holo-EntB, which is then acylated by EntE with 2,3-dihydroxybenzoyl-AMP to form DHB-holo-EntB. Then this product will serve in the formation of the amide bond between 2,3-dihydroxybenzoate (DHB) and L-serine. In Escherichia coli O157:H7, this protein is Enterobactin synthase component B.